Here is a 446-residue protein sequence, read N- to C-terminus: Glutamine synthetase (446 aa).

A GS beta-grasp domain is found at 18–103; that stretch reads ENVRYLRLQF…LICDVYKTDG (86 aa). One can recognise a GS catalytic domain in the interval 110 to 446; sequence PRANLKRVLK…WERDQYMKQY (337 aa). Residues E134 and E136 each coordinate Mg(2+). Residue E186 coordinates ATP. Mg(2+) is bound by residues E191 and E198. L-glutamate-binding positions include 242-243 and G243; that span reads NG. H247 lines the Mg(2+) pocket. Position 251 (S251) interacts with ATP. Residues R300, E306, and R318 each contribute to the L-glutamate site. Positions 318 and 323 each coordinate ATP. A Mg(2+)-binding site is contributed by E335. L-glutamate is bound at residue R337.

It belongs to the glutamine synthetase family. In terms of assembly, oligomer of 12 subunits arranged in the form of two hexagons. In its feedback-inhibited form, interacts with TnrA in order to block its DNA-binding activity. It depends on Mg(2+) as a cofactor.

The protein localises to the cytoplasm. The catalysed reaction is L-glutamate + NH4(+) + ATP = L-glutamine + ADP + phosphate + H(+). Inhibited by glutamine. In terms of biological role, glutamine synthetase (GS) is an unusual multitasking protein that functions as an enzyme, a transcription coregulator, and a chaperone in ammonium assimilation and in the regulation of genes involved in nitrogen metabolism. It catalyzes the ATP-dependent biosynthesis of glutamine from glutamate and ammonia. Feedback-inhibited GlnA also interacts with and regulates the activity of the transcriptional regulator TnrA. During nitrogen limitation, TnrA is in its DNA-binding active state and turns on the transcription of genes required for nitrogen assimilation. Under conditions of nitrogen excess, feedback-inhibited GlnA forms a stable complex with TnrA, which inhibits its DNA-binding activity. In contrast, feedback-inhibited GlnA acts as a chaperone to stabilize the DNA-binding activity of GlnR, which represses the transcription of nitrogen assimilation genes. This Staphylococcus aureus (strain N315) protein is Glutamine synthetase.